Consider the following 143-residue polypeptide: Anti-sigma F factor (143 aa).

This sequence belongs to the anti-sigma-factor family.

The enzyme catalyses L-seryl-[protein] + ATP = O-phospho-L-seryl-[protein] + ADP + H(+). It carries out the reaction L-threonyl-[protein] + ATP = O-phospho-L-threonyl-[protein] + ADP + H(+). Its function is as follows. Binds to sigma F and blocks its ability to form an RNA polymerase holoenzyme (E-sigma F). Phosphorylates SpoIIAA on a serine residue. This phosphorylation may enable SpoIIAA to act as an anti-anti-sigma factor that counteracts SpoIIAB and thus releases sigma F from inhibition. The protein is Anti-sigma F factor of Clostridium novyi (strain NT).